A 312-amino-acid chain; its full sequence is Olfactory receptor 4F3/4F16/4F29 (312 aa).

At Met-1 to Leu-25 the chain is on the extracellular side. N-linked (GlcNAc...) asparagine glycosylation is present at Asn-5. Residues Leu-26–Val-49 form a helical membrane-spanning segment. At Thr-50–Ser-57 the chain is on the cytoplasmic side. Residues Pro-58–Pro-79 form a helical membrane-spanning segment. Topologically, residues Lys-80–Gln-100 are extracellular. Cysteines 97 and 189 form a disulfide. Residues Ile-101 to Phe-120 form a helical membrane-spanning segment. Residues Asp-121–Arg-139 are Cytoplasmic-facing. The helical transmembrane segment at Met-140–Phe-158 threads the bilayer. The Extracellular segment spans residues Gln-159 to Leu-195. The chain crosses the membrane as a helical span at residues Gln-196–Val-219. The Cytoplasmic portion of the chain corresponds to Phe-220–Lys-235. A helical transmembrane segment spans residues Ala-236–Tyr-258. Residues Thr-259–Lys-269 are Extracellular-facing. A helical membrane pass occupies residues Phe-270–Phe-289. Residues Arg-290–Ser-312 are Cytoplasmic-facing.

The protein belongs to the G-protein coupled receptor 1 family.

The protein resides in the cell membrane. Odorant receptor. The protein is Olfactory receptor 4F3/4F16/4F29 (OR4F3) of Homo sapiens (Human).